Consider the following 343-residue polypeptide: Programmed cell death protein 2 (343 aa).

Cys-134, Cys-137, Cys-145, Cys-148, Cys-154, His-158, His-167, and Cys-171 together coordinate Zn(2+). The segment at 134–171 (CRVCGCLAPMTCSRCKQAHYCSKEHQTLDWRLGHKQAC) adopts an MYND-type; atypical zinc-finger fold.

Post-translationally, ubiquitinated by PRKN, promoting proteasomal degradation.

Its subcellular location is the nucleus. In terms of biological role, may be a DNA-binding protein with a regulatory function. May play an important role in cell death and/or in regulation of cell proliferation. The sequence is that of Programmed cell death protein 2 (Pdcd2) from Mus musculus (Mouse).